Reading from the N-terminus, the 142-residue chain is Glia maturation factor beta (142 aa).

N-acetylserine is present on S2. The 136-residue stretch at 4–139 folds into the ADF-H domain; it reads SLVVCDVAED…TEEWLREKLG (136 aa).

The protein belongs to the actin-binding proteins ADF family. GMF subfamily. Post-translationally, phosphorylated; stimulated by phorbol ester.

Functionally, this protein causes differentiation of brain cells, stimulation of neural regeneration, and inhibition of proliferation of tumor cells. The polypeptide is Glia maturation factor beta (GMFB) (Homo sapiens (Human)).